A 67-amino-acid polypeptide reads, in one-letter code: Protein AaeX (67 aa).

A run of 2 helical transmembrane segments spans residues 3–23 (VLPV…EIIV) and 43–63 (LVWH…YVVS).

It belongs to the AaeX family.

The protein localises to the cell membrane. In Erwinia tasmaniensis (strain DSM 17950 / CFBP 7177 / CIP 109463 / NCPPB 4357 / Et1/99), this protein is Protein AaeX.